Reading from the N-terminus, the 70-residue chain is Large ribosomal subunit protein bL31 (70 aa).

4 residues coordinate Zn(2+): Cys16, Cys18, Cys37, and Cys40.

It belongs to the bacterial ribosomal protein bL31 family. Type A subfamily. In terms of assembly, part of the 50S ribosomal subunit. Zn(2+) is required as a cofactor.

Its function is as follows. Binds the 23S rRNA. The polypeptide is Large ribosomal subunit protein bL31 (Salmonella agona (strain SL483)).